Here is a 221-residue protein sequence, read N- to C-terminus: Deoxyribose-phosphate aldolase 1 (221 aa).

Asp89 functions as the Proton donor/acceptor in the catalytic mechanism. The Schiff-base intermediate with acetaldehyde role is filled by Lys152. Lys181 acts as the Proton donor/acceptor in catalysis.

Belongs to the DeoC/FbaB aldolase family. DeoC type 1 subfamily.

Its subcellular location is the cytoplasm. The enzyme catalyses 2-deoxy-D-ribose 5-phosphate = D-glyceraldehyde 3-phosphate + acetaldehyde. The protein operates within carbohydrate degradation; 2-deoxy-D-ribose 1-phosphate degradation; D-glyceraldehyde 3-phosphate and acetaldehyde from 2-deoxy-alpha-D-ribose 1-phosphate: step 2/2. Its function is as follows. Catalyzes a reversible aldol reaction between acetaldehyde and D-glyceraldehyde 3-phosphate to generate 2-deoxy-D-ribose 5-phosphate. The protein is Deoxyribose-phosphate aldolase 1 of Oceanobacillus iheyensis (strain DSM 14371 / CIP 107618 / JCM 11309 / KCTC 3954 / HTE831).